A 1390-amino-acid polypeptide reads, in one-letter code: DNA-directed RNA polymerase subunit beta (1390 aa).

This sequence belongs to the RNA polymerase beta chain family. As to quaternary structure, the RNAP catalytic core consists of 2 alpha, 1 beta, 1 beta' and 1 omega subunit. When a sigma factor is associated with the core the holoenzyme is formed, which can initiate transcription.

The enzyme catalyses RNA(n) + a ribonucleoside 5'-triphosphate = RNA(n+1) + diphosphate. Its function is as follows. DNA-dependent RNA polymerase catalyzes the transcription of DNA into RNA using the four ribonucleoside triphosphates as substrates. In Mycoplasma genitalium (strain ATCC 33530 / DSM 19775 / NCTC 10195 / G37) (Mycoplasmoides genitalium), this protein is DNA-directed RNA polymerase subunit beta.